The sequence spans 379 residues: Cytochrome b (379 aa).

Helical transmembrane passes span 33 to 53 (FGSLLGMCLVIQILTGLFLAM), 77 to 98 (WLIRYLHANGASMFFICLFIHV), 113 to 133 (WNIGIILLLTTMATAFVGYVL), and 178 to 198 (FFAFHFILPFIIAAFALVHLL). The heme b site is built by His-83 and His-97. Residues His-182 and His-196 each coordinate heme b. An a ubiquinone-binding site is contributed by His-201. The next 4 membrane-spanning stretches (helical) occupy residues 226-246 (IKDLLGIFLLLLILMALALFF), 288-308 (LGGVLALILSILILAAFPLLN), 320-340 (VTQTIYWIFIANLLVLTWIGG), and 347-367 (FTMIGQIASVTYFTIITILIP).

It belongs to the cytochrome b family. The cytochrome bc1 complex contains 11 subunits: 3 respiratory subunits (MT-CYB, CYC1 and UQCRFS1), 2 core proteins (UQCRC1 and UQCRC2) and 6 low-molecular weight proteins (UQCRH/QCR6, UQCRB/QCR7, UQCRQ/QCR8, UQCR10/QCR9, UQCR11/QCR10 and a cleavage product of UQCRFS1). This cytochrome bc1 complex then forms a dimer. It depends on heme b as a cofactor.

It is found in the mitochondrion inner membrane. In terms of biological role, component of the ubiquinol-cytochrome c reductase complex (complex III or cytochrome b-c1 complex) that is part of the mitochondrial respiratory chain. The b-c1 complex mediates electron transfer from ubiquinol to cytochrome c. Contributes to the generation of a proton gradient across the mitochondrial membrane that is then used for ATP synthesis. This is Cytochrome b (MT-CYB) from Akodon philipmyersi (Myers' grass mouse).